Here is a 279-residue protein sequence, read N- to C-terminus: Dermonecrotic toxin StSicTox-betaIB1i (279 aa).

His-12 is a catalytic residue. Mg(2+)-binding residues include Glu-32 and Asp-34. His-48 (nucleophile) is an active-site residue. Intrachain disulfides connect Cys-52-Cys-58 and Cys-54-Cys-198. Residue Asp-92 coordinates Mg(2+).

This sequence belongs to the arthropod phospholipase D family. Class II subfamily. Class IIb sub-subfamily. Mg(2+) serves as cofactor. Expressed by the venom gland.

It is found in the secreted. The enzyme catalyses an N-(acyl)-sphingosylphosphocholine = an N-(acyl)-sphingosyl-1,3-cyclic phosphate + choline. The catalysed reaction is N-hexanoyl-sphing-4-enine-1-phosphocholine = N-(hexanoyl)-sphing-4-enine-1,3-cyclic phosphate + choline. It catalyses the reaction an N-(acyl)-sphingosylphosphoethanolamine = an N-(acyl)-sphingosyl-1,3-cyclic phosphate + ethanolamine. It carries out the reaction N-dodecanoyl-heptadecasphing-4-enine-1-phosphoethanolamine = N-dodecanoyl-heptadecasphing-4-enine-1,3-cyclic phosphate + ethanolamine. The enzyme catalyses a 1-acyl-sn-glycero-3-phosphoethanolamine = a 1-acyl-sn-glycero-2,3-cyclic phosphate + ethanolamine. The catalysed reaction is 1-tetradecanoyl-sn-glycero-3-phosphoethanolamine = 1-tetradecanoyl-sn-glycero-2,3-cyclic phosphate + ethanolamine. In terms of biological role, dermonecrotic toxins cleave the phosphodiester linkage between the phosphate and headgroup of certain phospholipids (sphingolipid and lysolipid substrates), forming an alcohol (often choline) and a cyclic phosphate. This toxin acts on lysophosphatidylethanolamine (LPE) and ceramide phosphoethanolamine (CPE) with high activity. This toxin acts on sphingomyelin (SM) with very low activity and is not active on lysophosphatidylserine (LPS), lysophosphatidylcholine (LPC) and lysophosphatidylglycerol (LPG). It acts by transphosphatidylation, releasing exclusively cyclic phosphate as second products. It is not surprising that spider toxins have affinity for ethanolamine-containing sphingolipids since they are common in insect prey. Induces dermonecrosis, hemolysis, increased vascular permeability, edema, inflammatory response, and platelet aggregation. The polypeptide is Dermonecrotic toxin StSicTox-betaIB1i (Sicarius terrosus (Cave spider)).